A 470-amino-acid chain; its full sequence is Glutamate--tRNA ligase (470 aa).

The 'HIGH' region motif lies at 12–22; it reads PSPTGIFHVGG. Zn(2+)-binding residues include Cys103, Cys105, Cys125, and Asp127. A 'KMSKS' region motif is present at residues 236–240; sequence KLSKR. Lys239 serves as a coordination point for ATP.

This sequence belongs to the class-I aminoacyl-tRNA synthetase family. Glutamate--tRNA ligase type 1 subfamily. As to quaternary structure, monomer. It depends on Zn(2+) as a cofactor.

It is found in the cytoplasm. The enzyme catalyses tRNA(Glu) + L-glutamate + ATP = L-glutamyl-tRNA(Glu) + AMP + diphosphate. In terms of biological role, catalyzes the attachment of glutamate to tRNA(Glu) in a two-step reaction: glutamate is first activated by ATP to form Glu-AMP and then transferred to the acceptor end of tRNA(Glu). This is Glutamate--tRNA ligase from Frankia alni (strain DSM 45986 / CECT 9034 / ACN14a).